Here is a 125-residue protein sequence, read N- to C-terminus: Protein ELF4-LIKE 1 (125 aa).

The span at methionine 1–methionine 18 shows a compositional bias: polar residues. Positions methionine 1–alanine 28 are disordered.

The protein belongs to the EARLY FLOWERING 4 family. In terms of assembly, homodimer.

The protein resides in the nucleus. Component of the central CCA1/LHY-TOC1 feedback loop in the circadian clock that promotes clock accuracy and is required for sustained rhythms in the absence of daily light/dark cycles. The polypeptide is Protein ELF4-LIKE 1 (EFL1) (Arabidopsis thaliana (Mouse-ear cress)).